We begin with the raw amino-acid sequence, 791 residues long: Ataxin-1 (791 aa).

A compositionally biased stretch (basic and acidic residues) spans 1 to 30 (MKSNQERSNECLPPKKREIPATSRPSEEKA). A disordered region spans residues 1–36 (MKSNQERSNECLPPKKREIPATSRPSEEKATALPSD). Lys16 participates in a covalent cross-link: Glycyl lysine isopeptide (Lys-Gly) (interchain with G-Cter in SUMO). 2 positions are modified to phosphoserine: Ser81 and Ser87. Disordered stretches follow at residues 187-240 (SQAP…TSPP) and 298-402 (EVLN…HRSY). Residue Lys193 forms a Glycyl lysine isopeptide (Lys-Gly) (interchain with G-Cter in SUMO) linkage. A Phosphoserine modification is found at Ser213. The residue at position 218 (Thr218) is a Phosphothreonine. Polar residues-rich tracts occupy residues 219–236 (QQNQ…SGRA), 312–327 (ASSS…SSKS), and 362–388 (PNSS…TLND). At Ser229 the chain carries Phosphoserine. Positions 470–580 (VGSPDMDTPG…TEDFIQSAEI (111 aa)) are self-association. The segment at 514–791 (LVTQAAYPAM…CIEGRSNVGK (278 aa)) is interaction with USP7. The segment at 516-742 (TQAAYPAMVQ…FLSKIEPSKP (227 aa)) is RNA-binding. Residues 538–669 (SPTTASPTLP…SLTLKNLKNG (132 aa)) enclose the AXH domain. Residues Lys585, Lys672, and Lys721 each participate in a glycyl lysine isopeptide (Lys-Gly) (interchain with G-Cter in SUMO) cross-link. A disordered region spans residues 736–774 (KIEPSKPTATRKRRWSAPETRKLEKSEDEPPLTLPKPSL). Ser751 is subject to Phosphoserine. The Nuclear localization signal signature appears at 770 to 773 (PKPS).

This sequence belongs to the ATXN1 family. Homooligomer. Interacts with PQBP1, UBQLN4 and USP7. Interacts with ANP32A. Interacts with CIC. Directly interacts with RBPJ; this interaction is disrupted in the presence of Notch intracellular domain. Interacts with ATXN1L; competes with ATXN1L for RBPJ-binding. Found in a complex with CIC and ATXN1L. Ubiquitinated by UBE3A, leading to its degradation by the proteasome. The presence of poly-Gln repeats in trangenic models developed to replicate phenotypes of the spinocerebellar ataxia 1 disease (SCA1) impair ubiquitination and degradation, leading to accumulation of Atxn1 in neurons and subsequent toxicity. In terms of processing, sumoylation is dependent on nuclear localization and phosphorylation at Ser-751. As to expression, expressed in the cortex and hypothalamus (at protein level). Widely expressed. In brain, the pattern of distribution is limited to neuron populations.

It localises to the cytoplasm. The protein localises to the nucleus. Chromatin-binding factor that repress Notch signaling in the absence of Notch intracellular domain by acting as a CBF1 corepressor. Binds to the HEY promoter and might assist, along with NCOR2, RBPJ-mediated repression. May be involved in RNA metabolism. In concert with CIC and ATXN1L, involved in brain development. This is Ataxin-1 (Atxn1) from Mus musculus (Mouse).